We begin with the raw amino-acid sequence, 243 residues long: Ubiquinone/menaquinone biosynthesis C-methyltransferase UbiE (243 aa).

S-adenosyl-L-methionine is bound by residues T69, D90, and 116–117; that span reads DA.

It belongs to the class I-like SAM-binding methyltransferase superfamily. MenG/UbiE family.

It catalyses the reaction a 2-demethylmenaquinol + S-adenosyl-L-methionine = a menaquinol + S-adenosyl-L-homocysteine + H(+). It carries out the reaction a 2-methoxy-6-(all-trans-polyprenyl)benzene-1,4-diol + S-adenosyl-L-methionine = a 5-methoxy-2-methyl-3-(all-trans-polyprenyl)benzene-1,4-diol + S-adenosyl-L-homocysteine + H(+). The protein operates within quinol/quinone metabolism; menaquinone biosynthesis; menaquinol from 1,4-dihydroxy-2-naphthoate: step 2/2. It functions in the pathway cofactor biosynthesis; ubiquinone biosynthesis. Methyltransferase required for the conversion of demethylmenaquinol (DMKH2) to menaquinol (MKH2) and the conversion of 2-polyprenyl-6-methoxy-1,4-benzoquinol (DDMQH2) to 2-polyprenyl-3-methyl-6-methoxy-1,4-benzoquinol (DMQH2). This Burkholderia vietnamiensis (strain G4 / LMG 22486) (Burkholderia cepacia (strain R1808)) protein is Ubiquinone/menaquinone biosynthesis C-methyltransferase UbiE.